We begin with the raw amino-acid sequence, 565 residues long: Dihydroxy-acid dehydratase (565 aa).

Asp83 contributes to the Mg(2+) binding site. Cys124 is a binding site for [2Fe-2S] cluster. Mg(2+)-binding residues include Asp125 and Lys126. Residue Lys126 is modified to N6-carboxylysine. Position 197 (Cys197) interacts with [2Fe-2S] cluster. Glu451 lines the Mg(2+) pocket. Catalysis depends on Ser477, which acts as the Proton acceptor.

The protein belongs to the IlvD/Edd family. As to quaternary structure, homodimer. The cofactor is [2Fe-2S] cluster. Requires Mg(2+) as cofactor.

It catalyses the reaction (2R)-2,3-dihydroxy-3-methylbutanoate = 3-methyl-2-oxobutanoate + H2O. It carries out the reaction (2R,3R)-2,3-dihydroxy-3-methylpentanoate = (S)-3-methyl-2-oxopentanoate + H2O. The protein operates within amino-acid biosynthesis; L-isoleucine biosynthesis; L-isoleucine from 2-oxobutanoate: step 3/4. It functions in the pathway amino-acid biosynthesis; L-valine biosynthesis; L-valine from pyruvate: step 3/4. Functionally, functions in the biosynthesis of branched-chain amino acids. Catalyzes the dehydration of (2R,3R)-2,3-dihydroxy-3-methylpentanoate (2,3-dihydroxy-3-methylvalerate) into 2-oxo-3-methylpentanoate (2-oxo-3-methylvalerate) and of (2R)-2,3-dihydroxy-3-methylbutanoate (2,3-dihydroxyisovalerate) into 2-oxo-3-methylbutanoate (2-oxoisovalerate), the penultimate precursor to L-isoleucine and L-valine, respectively. In Symbiobacterium thermophilum (strain DSM 24528 / JCM 14929 / IAM 14863 / T), this protein is Dihydroxy-acid dehydratase.